Reading from the N-terminus, the 296-residue chain is Ribosomal RNA small subunit methyltransferase H (296 aa).

S-adenosyl-L-methionine-binding positions include 38–40 (GAH), Glu57, Phe88, Asp103, and His110.

Belongs to the methyltransferase superfamily. RsmH family.

It localises to the cytoplasm. The enzyme catalyses cytidine(1402) in 16S rRNA + S-adenosyl-L-methionine = N(4)-methylcytidine(1402) in 16S rRNA + S-adenosyl-L-homocysteine + H(+). Functionally, specifically methylates the N4 position of cytidine in position 1402 (C1402) of 16S rRNA. The chain is Ribosomal RNA small subunit methyltransferase H from Borreliella afzelii (strain PKo) (Borrelia afzelii).